The following is a 506-amino-acid chain: Cytochrome P450 52B1 (506 aa).

C451 is a heme binding site.

Belongs to the cytochrome P450 family. Requires heme as cofactor.

Its function is as follows. Together with an NADPH cytochrome P450 the enzyme system catalyzes the terminal hydroxylation as the first step in the assimilation of alkanes and fatty acids. The polypeptide is Cytochrome P450 52B1 (CYP52B1) (Candida tropicalis (Yeast)).